A 972-amino-acid polypeptide reads, in one-letter code: Isoleucine--tRNA ligase (972 aa).

Positions 63–73 (PYANGNIHIGH) match the 'HIGH' region motif. Position 603 (Glu603) interacts with L-isoleucyl-5'-AMP. The short motif at 644 to 648 (KMSKS) is the 'KMSKS' region element. Lys647 contacts ATP.

It belongs to the class-I aminoacyl-tRNA synthetase family. IleS type 1 subfamily. In terms of assembly, monomer.

Its subcellular location is the cytoplasm. The catalysed reaction is tRNA(Ile) + L-isoleucine + ATP = L-isoleucyl-tRNA(Ile) + AMP + diphosphate. Catalyzes the attachment of isoleucine to tRNA(Ile). As IleRS can inadvertently accommodate and process structurally similar amino acids such as valine, to avoid such errors it has two additional distinct tRNA(Ile)-dependent editing activities. One activity is designated as 'pretransfer' editing and involves the hydrolysis of activated Val-AMP. The other activity is designated 'posttransfer' editing and involves deacylation of mischarged Val-tRNA(Ile). This is Isoleucine--tRNA ligase from Brucella melitensis biotype 1 (strain ATCC 23456 / CCUG 17765 / NCTC 10094 / 16M).